A 346-amino-acid chain; its full sequence is N-acetyl-gamma-glutamyl-phosphate reductase (346 aa).

The active site involves Cys150.

This sequence belongs to the NAGSA dehydrogenase family. Type 1 subfamily.

The protein localises to the cytoplasm. The enzyme catalyses N-acetyl-L-glutamate 5-semialdehyde + phosphate + NADP(+) = N-acetyl-L-glutamyl 5-phosphate + NADPH + H(+). The protein operates within amino-acid biosynthesis; L-arginine biosynthesis; N(2)-acetyl-L-ornithine from L-glutamate: step 3/4. In terms of biological role, catalyzes the NADPH-dependent reduction of N-acetyl-5-glutamyl phosphate to yield N-acetyl-L-glutamate 5-semialdehyde. The chain is N-acetyl-gamma-glutamyl-phosphate reductase from Acetivibrio thermocellus (strain ATCC 27405 / DSM 1237 / JCM 9322 / NBRC 103400 / NCIMB 10682 / NRRL B-4536 / VPI 7372) (Clostridium thermocellum).